A 408-amino-acid chain; its full sequence is Acetylornithine aminotransferase (408 aa).

Residues 107-108 (GT) and Phe-141 contribute to the pyridoxal 5'-phosphate site. Arg-144 provides a ligand contact to N(2)-acetyl-L-ornithine. Position 227–230 (227–230 (DEIQ)) interacts with pyridoxal 5'-phosphate. An N6-(pyridoxal phosphate)lysine modification is found at Lys-256. Residue Thr-284 participates in N(2)-acetyl-L-ornithine binding. Thr-285 contributes to the pyridoxal 5'-phosphate binding site.

This sequence belongs to the class-III pyridoxal-phosphate-dependent aminotransferase family. ArgD subfamily. In terms of assembly, homodimer. Requires pyridoxal 5'-phosphate as cofactor.

It localises to the cytoplasm. It catalyses the reaction N(2)-acetyl-L-ornithine + 2-oxoglutarate = N-acetyl-L-glutamate 5-semialdehyde + L-glutamate. It functions in the pathway amino-acid biosynthesis; L-arginine biosynthesis; N(2)-acetyl-L-ornithine from L-glutamate: step 4/4. This Xanthomonas campestris pv. campestris (strain ATCC 33913 / DSM 3586 / NCPPB 528 / LMG 568 / P 25) protein is Acetylornithine aminotransferase.